The sequence spans 137 residues: Nucleoside diphosphate kinase (137 aa).

Positions 9, 57, 85, 91, 102, and 112 each coordinate ATP. H115 acts as the Pros-phosphohistidine intermediate in catalysis.

This sequence belongs to the NDK family. In terms of assembly, homotetramer. The cofactor is Mg(2+).

The protein localises to the cytoplasm. It carries out the reaction a 2'-deoxyribonucleoside 5'-diphosphate + ATP = a 2'-deoxyribonucleoside 5'-triphosphate + ADP. It catalyses the reaction a ribonucleoside 5'-diphosphate + ATP = a ribonucleoside 5'-triphosphate + ADP. Functionally, major role in the synthesis of nucleoside triphosphates other than ATP. The ATP gamma phosphate is transferred to the NDP beta phosphate via a ping-pong mechanism, using a phosphorylated active-site intermediate. In Aliarcobacter butzleri (strain RM4018) (Arcobacter butzleri), this protein is Nucleoside diphosphate kinase.